Reading from the N-terminus, the 164-residue chain is Large ribosomal subunit protein uL10 (164 aa).

This sequence belongs to the universal ribosomal protein uL10 family. Part of the ribosomal stalk of the 50S ribosomal subunit. The N-terminus interacts with L11 and the large rRNA to form the base of the stalk. The C-terminus forms an elongated spine to which L12 dimers bind in a sequential fashion forming a multimeric L10(L12)X complex.

Forms part of the ribosomal stalk, playing a central role in the interaction of the ribosome with GTP-bound translation factors. The chain is Large ribosomal subunit protein uL10 from Aliivibrio fischeri (strain MJ11) (Vibrio fischeri).